The following is a 578-amino-acid chain: Proline--tRNA ligase (578 aa).

The protein belongs to the class-II aminoacyl-tRNA synthetase family. ProS type 1 subfamily. As to quaternary structure, homodimer.

The protein localises to the cytoplasm. It carries out the reaction tRNA(Pro) + L-proline + ATP = L-prolyl-tRNA(Pro) + AMP + diphosphate. Functionally, catalyzes the attachment of proline to tRNA(Pro) in a two-step reaction: proline is first activated by ATP to form Pro-AMP and then transferred to the acceptor end of tRNA(Pro). As ProRS can inadvertently accommodate and process non-cognate amino acids such as alanine and cysteine, to avoid such errors it has two additional distinct editing activities against alanine. One activity is designated as 'pretransfer' editing and involves the tRNA(Pro)-independent hydrolysis of activated Ala-AMP. The other activity is designated 'posttransfer' editing and involves deacylation of mischarged Ala-tRNA(Pro). The misacylated Cys-tRNA(Pro) is not edited by ProRS. The protein is Proline--tRNA ligase of Burkholderia multivorans (strain ATCC 17616 / 249).